A 254-amino-acid chain; its full sequence is Triosephosphate isomerase (254 aa).

12 to 14 contributes to the substrate binding site; sequence NWK. His-99 acts as the Electrophile in catalysis. Glu-169 (proton acceptor) is an active-site residue. Substrate-binding positions include Gly-175, Ser-214, and 235 to 236; that span reads GG.

The protein belongs to the triosephosphate isomerase family. Homodimer.

It localises to the cytoplasm. It carries out the reaction D-glyceraldehyde 3-phosphate = dihydroxyacetone phosphate. It participates in carbohydrate biosynthesis; gluconeogenesis. It functions in the pathway carbohydrate degradation; glycolysis; D-glyceraldehyde 3-phosphate from glycerone phosphate: step 1/1. In terms of biological role, involved in the gluconeogenesis. Catalyzes stereospecifically the conversion of dihydroxyacetone phosphate (DHAP) to D-glyceraldehyde-3-phosphate (G3P). This chain is Triosephosphate isomerase, found in Xanthobacter autotrophicus (strain ATCC BAA-1158 / Py2).